The sequence spans 491 residues: Glutamate--tRNA ligase (491 aa).

The 'HIGH' region signature appears at 13–23 (PSPTGFLHIGN). The Zn(2+) site is built by C110, C112, C137, and H139. Residues 254 to 258 (KLSKR) carry the 'KMSKS' region motif. K257 serves as a coordination point for ATP.

It belongs to the class-I aminoacyl-tRNA synthetase family. Glutamate--tRNA ligase type 1 subfamily. As to quaternary structure, monomer. Zn(2+) serves as cofactor.

It is found in the cytoplasm. The enzyme catalyses tRNA(Glu) + L-glutamate + ATP = L-glutamyl-tRNA(Glu) + AMP + diphosphate. Functionally, catalyzes the attachment of glutamate to tRNA(Glu) in a two-step reaction: glutamate is first activated by ATP to form Glu-AMP and then transferred to the acceptor end of tRNA(Glu). This Listeria monocytogenes serovar 1/2a (strain ATCC BAA-679 / EGD-e) protein is Glutamate--tRNA ligase.